The following is a 385-amino-acid chain: Protein pelota homolog (385 aa).

It belongs to the eukaryotic release factor 1 family. Pelota subfamily. As to quaternary structure, component of the Pelota-HBS1L complex, also named Dom34-Hbs1 complex, composed of PELO and HBS1L. The cofactor is a divalent metal cation.

It is found in the cytoplasm. Its function is as follows. Component of the Pelota-HBS1L complex, a complex that recognizes stalled ribosomes and triggers the No-Go Decay (NGD) pathway. In the Pelota-HBS1L complex, PELO recognizes ribosomes stalled at the 3' end of an mRNA and engages stalled ribosomes by destabilizing mRNA in the mRNA channel. Following mRNA extraction from stalled ribosomes by the SKI complex, the Pelota-HBS1L complex promotes recruitment of ABCE1, which drives the disassembly of stalled ribosomes, followed by degradation of damaged mRNAs as part of the NGD pathway. This chain is Protein pelota homolog (PELO), found in Gallus gallus (Chicken).